The sequence spans 285 residues: 1,4-dihydroxy-2-naphthoyl-CoA synthase (285 aa).

Substrate-binding positions include Arg-45, 84-88 (SGGDQ), Tyr-97, 129-133 (YAIGG), Thr-155, Ser-161, Tyr-258, and Lys-273. Residue 154–156 (QTG) coordinates hydrogencarbonate.

Belongs to the enoyl-CoA hydratase/isomerase family. MenB subfamily. Requires hydrogencarbonate as cofactor.

It catalyses the reaction 2-succinylbenzoyl-CoA + H(+) = 1,4-dihydroxy-2-naphthoyl-CoA + H2O. It functions in the pathway quinol/quinone metabolism; 1,4-dihydroxy-2-naphthoate biosynthesis; 1,4-dihydroxy-2-naphthoate from chorismate: step 6/7. The protein operates within quinol/quinone metabolism; menaquinone biosynthesis. Its function is as follows. Converts o-succinylbenzoyl-CoA (OSB-CoA) to 1,4-dihydroxy-2-naphthoyl-CoA (DHNA-CoA). This Haemophilus influenzae (strain ATCC 51907 / DSM 11121 / KW20 / Rd) protein is 1,4-dihydroxy-2-naphthoyl-CoA synthase.